We begin with the raw amino-acid sequence, 317 residues long: MFRKILSVLNPTVFVLSLCFQIILIYTIIRHSPKNLSTLKAILLTNCCFQLLQSSMVFFTQIQLVNHLVPIELWSYGPCRHFEAFMCYSMFHILQTSSLVSGLTVFLTTFMKYQAARHVRPSKKKNCFVILFISSIVLISAGCGILLVIIQALPLEIREKYYRINLELDEYSVIGIVDYSVLPSRVNGIIINGLVVIVPITCLLLRRKILKLLTASSDALYFQNRVFLQGLTLQIFGHTLVYVPIFICSTISLITKTEYTFAQFFIFVLPHLTTVIDPLLTMYFVTPYRKRLMVWLRLKNDKVHSVSPSTFAVSANH.

Helical transmembrane passes span 5 to 25 (ILSV…IILI), 90 to 110 (MFHI…LTTF), 130 to 150 (ILFI…LVII), 185 to 205 (RVNG…CLLL), 235 to 255 (IFGH…SLIT), and 264 to 284 (FFIF…TMYF).

This sequence belongs to the nematode receptor-like protein srd family.

The protein localises to the membrane. The chain is Serpentine receptor class delta-44 (srd-44) from Caenorhabditis elegans.